The primary structure comprises 114 residues: Large ribosomal subunit protein uL22 (114 aa).

It belongs to the universal ribosomal protein uL22 family. As to quaternary structure, part of the 50S ribosomal subunit.

Functionally, this protein binds specifically to 23S rRNA; its binding is stimulated by other ribosomal proteins, e.g. L4, L17, and L20. It is important during the early stages of 50S assembly. It makes multiple contacts with different domains of the 23S rRNA in the assembled 50S subunit and ribosome. The globular domain of the protein is located near the polypeptide exit tunnel on the outside of the subunit, while an extended beta-hairpin is found that lines the wall of the exit tunnel in the center of the 70S ribosome. This chain is Large ribosomal subunit protein uL22, found in Streptococcus pneumoniae (strain Taiwan19F-14).